The primary structure comprises 159 residues: uncharacterized protein (159 aa).

4 helical membrane passes run 5 to 27, 34 to 51, 61 to 83, and 103 to 125; these read TLDLILGIIMGIVTVRATMRGFV, ASILCAAVVAILCHKRLV, SILLPCITFLITFMGVYCVMLFL, and FGFFFGIIEGSVLLTVILLLLHV.

The protein localises to the cell membrane. This is an uncharacterized protein from Treponema pallidum (strain Nichols).